The primary structure comprises 370 residues: Ubiquitin carboxyl-terminal hydrolase 12 (370 aa).

The Required for plasma membrane localization of USP12/WDR20 signature appears at 1 to 4; the sequence is MEIL. The USP domain maps to 39–369; it reads FGLVNFGNTC…SGYILFYQSR (331 aa). The active-site Nucleophile is Cys-48. Over residues 146-157 the composition is skewed to basic and acidic residues; it reads QEKQNGRLRNGD. Residues 146 to 168 are disordered; that stretch reads QEKQNGRLRNGDVDSEDNNSTPD. Cys-186, Cys-189, Cys-233, and Cys-236 together coordinate Zn(2+). His-317 (proton acceptor) is an active-site residue.

Belongs to the peptidase C19 family. USP12/USP46 subfamily. Interacts with WDR48. Interacts with WDR20; this interaction promotes translocation of the USP12 complex to the plasma membrane. Component of the USP12-WDR20-WDR48 deubiquitinating complex. Component of the USP12-DMWD-WDR48 deubiquitinating complex. Interacts with PHLPP1. Interacts with RBPJ. Interacts with CBP; this interaction blocks the acetyltransferase activity of CREBBP. Interacts with ITCH; the interaction is more efficient when both USP12 and WDR48/UAF1 are involved and may mediate recruitment of the USP12 deubiquitinating complex to Notch.

Its subcellular location is the nucleus. The protein resides in the cytoplasm. It is found in the cell membrane. It catalyses the reaction Thiol-dependent hydrolysis of ester, thioester, amide, peptide and isopeptide bonds formed by the C-terminal Gly of ubiquitin (a 76-residue protein attached to proteins as an intracellular targeting signal).. Its activity is regulated as follows. Activated by interaction with WDR20, WDR48 and DMWD through different allosteric mechanisms. Functionally, deubiquitinating enzyme that plays various roles in the regulation of the immune response and inflammation. During TCR engagement and activation, translocates into the cytoplasm and deubiquitinates its substrates LAT and TRAT1 and prevents their lysosome-dependent degradation to stabilize the TCR signaling complex at the plasma membrane. Plays an essential role in the selective LPS-induced macrophage response through the activation of NF-kappa-B pathway. In addition, promotes that antiviral immune response through targeting DNA sensor IFI16 to inhibit its proteasome-dependent degradation. Participates in the interferon signaling pathway and antiviral response independently of its deubiquitinase activity by maintaining nuclear phosphorylated STAT1 levels via inhibition of its CREBBP-mediated acetylation and subsequent dephosphorylation. Plays an intrinsic role in promoting the differentiation, activation and proliferation of CD4(+) T-cell by activating the NF-kappa-B signaling pathway through deubiquitinating and stabilizing B-cell lymphoma/leukemia 10/BCL10. In myeloid-derived suppressor cells promotes the activation of the NF-kappa-B via deubiquitination and stabilization of RELA. Regulates the 'Lys-63'-linked polyubiquitin chains of BAX and thereby modulates the mitochondrial apoptotic process. Negative regulator of NOTCH signaling that specifically deubiquitinates non-activated NOTCH receptors to target them for lysosomal degradation; deubiquitination of NOTCH stimulates its transport form late endosomes to lysosomes. Protects neurons against HTT/huntingtin-induced polyglutamine expansion-dependent neurodegeneration through regulation of autophagic flux. This function is independent of deubiquitinase activity or of other components of the USP12-WDR20-WDR48 deubiquitinating complex. In complex with WDR48, acts as a potential tumor suppressor by positively regulating PHLPP1 stability. This Rattus norvegicus (Rat) protein is Ubiquitin carboxyl-terminal hydrolase 12.